Reading from the N-terminus, the 134-residue chain is Large ribosomal subunit protein uL22 (134 aa).

Belongs to the universal ribosomal protein uL22 family. As to quaternary structure, part of the 50S ribosomal subunit.

In terms of biological role, this protein binds specifically to 23S rRNA; its binding is stimulated by other ribosomal proteins, e.g. L4, L17, and L20. It is important during the early stages of 50S assembly. It makes multiple contacts with different domains of the 23S rRNA in the assembled 50S subunit and ribosome. Its function is as follows. The globular domain of the protein is located near the polypeptide exit tunnel on the outside of the subunit, while an extended beta-hairpin is found that lines the wall of the exit tunnel in the center of the 70S ribosome. The protein is Large ribosomal subunit protein uL22 of Gluconacetobacter diazotrophicus (strain ATCC 49037 / DSM 5601 / CCUG 37298 / CIP 103539 / LMG 7603 / PAl5).